We begin with the raw amino-acid sequence, 307 residues long: Methionyl-tRNA formyltransferase (307 aa).

Residue 109 to 112 (SLLP) participates in (6S)-5,6,7,8-tetrahydrofolate binding.

Belongs to the Fmt family.

The catalysed reaction is L-methionyl-tRNA(fMet) + (6R)-10-formyltetrahydrofolate = N-formyl-L-methionyl-tRNA(fMet) + (6S)-5,6,7,8-tetrahydrofolate + H(+). Attaches a formyl group to the free amino group of methionyl-tRNA(fMet). The formyl group appears to play a dual role in the initiator identity of N-formylmethionyl-tRNA by promoting its recognition by IF2 and preventing the misappropriation of this tRNA by the elongation apparatus. The polypeptide is Methionyl-tRNA formyltransferase (Mycobacteroides abscessus (strain ATCC 19977 / DSM 44196 / CCUG 20993 / CIP 104536 / JCM 13569 / NCTC 13031 / TMC 1543 / L948) (Mycobacterium abscessus)).